The sequence spans 462 residues: WD repeat-containing protein WRAP73 (462 aa).

WD repeat units follow at residues 46-86, 89-129, 176-210, and 221-260; these read TCLD…WHCK, EGSA…VSYI, TDTQ…YSLD, and EWSL…MITE. Phosphoserine is present on Ser281. WD repeat units follow at residues 328–369 and 371–410; these read NPRM…LFVV and EHMS…SVQV.

Interacts with SSX2IP. Ubiquitous.

The protein localises to the cytoplasm. It localises to the cytoskeleton. The protein resides in the microtubule organizing center. Its subcellular location is the centrosome. Its function is as follows. The SSX2IP:WRAP73 complex is proposed to act as regulator of spindle anchoring at the mitotic centrosome. Required for the centrosomal localization of SSX2IP and normal mitotic bipolar spindle morphology. Required for the targeting of centriole satellite proteins to centrosomes such as of PCM1, SSX2IP, CEP290 and PIBF1/CEP90. Required for ciliogenesis and involved in the removal of the CEP97:CCP110 complex from the mother centriole. Involved in ciliary vesicle formation at the mother centriole and required for the docking of vesicles to the basal body during ciliogenesis; may promote docking of RAB8A- and ARL13B-containing vesicles. This is WD repeat-containing protein WRAP73 (Wrap73) from Mus musculus (Mouse).